A 453-amino-acid chain; its full sequence is Bis(5'-adenosyl)-triphosphatase ENPP4 (453 aa).

An N-terminal signal peptide occupies residues 1 to 18 (MKLLLMLLFSGLMTGCRG). The Extracellular portion of the chain corresponds to 19 to 407 (NSSSASPPKL…DQWCINLPEA (389 aa)). Zn(2+)-binding residues include D34 and T70. The active-site AMP-threonine intermediate is T70. Positions 91 and 154 each coordinate substrate. N-linked (GlcNAc...) asparagine glycosylation occurs at N166. Positions 189, 193, 237, and 238 each coordinate Zn(2+). A substrate-binding site is contributed by D189. A disulfide bridge links C254 with C287. N276 carries an N-linked (GlcNAc...) asparagine glycan. H336 lines the Zn(2+) pocket. Cysteines 394 and 401 form a disulfide. Residues 408–428 (IGIVIGALLVLTTLTCLIIIM) form a helical membrane-spanning segment. Residues 429–453 (QNRVSGPRPFSRLQLQEDDDDPLIG) are Cytoplasmic-facing.

Belongs to the nucleotide pyrophosphatase/phosphodiesterase family. Requires Zn(2+) as cofactor.

The protein localises to the cell membrane. The catalysed reaction is P(1),P(3)-bis(5'-adenosyl) triphosphate + H2O = AMP + ADP + 2 H(+). Hydrolyzes extracellular Ap3A into AMP and ADP, and Ap4A into AMP and ATP. Ap3A and Ap4A are diadenosine polyphosphates thought to induce proliferation of vascular smooth muscle cells. Acts as a procoagulant, mediating platelet aggregation at the site of nascent thrombus via release of ADP from Ap3A and activation of ADP receptors. This Bos taurus (Bovine) protein is Bis(5'-adenosyl)-triphosphatase ENPP4 (ENPP4).